The primary structure comprises 309 residues: D-galacturonate reductase (309 aa).

The Proton donor role is filled by Tyr-50. Residue His-109 coordinates substrate. Position 210-264 (Ser-210–Asn-264) interacts with NADP(+).

The protein belongs to the aldo/keto reductase family.

The catalysed reaction is L-galactonate + NADP(+) = aldehydo-D-galacturonate + NADPH + H(+). Its pathway is carbohydrate acid metabolism. Functionally, mediates the reduction of D-galacturonate to L-galactonate, the first step in D-galacturonate catabolic process. Also has activity with D-glucuronate and DL-glyceraldehyde. No activity is observed with D-glucose, D-fructose, D-xylose, D-galactose, L-arabinose or D-mannose. Activity is seen only with NADPH and not with NADH. This chain is D-galacturonate reductase (gar1), found in Hypocrea jecorina (Trichoderma reesei).